Consider the following 317-residue polypeptide: L-lactate dehydrogenase (317 aa).

NAD(+) is bound by residues 16-17, D38, K43, Y69, and 83-84; these read FV and GA. Substrate contacts are provided by Q86 and R92. NAD(+) contacts are provided by residues S105, 122–124, and S147; that span reads ATN. 124–127 is a substrate binding site; the sequence is NPVD. Position 152 to 155 (152 to 155) interacts with substrate; it reads DTAR. Beta-D-fructose 1,6-bisphosphate-binding positions include R157 and 169-172; that span reads QNVH. H179 serves as the catalytic Proton acceptor. Y224 is modified (phosphotyrosine). T233 contributes to the substrate binding site.

It belongs to the LDH/MDH superfamily. LDH family. In terms of assembly, exists as a dimer and a tetramer (dimer of dimers). The conversion occurs via the binding of fructose 1,6-bisphosphate (FBP) to the dimer.

It localises to the cytoplasm. The enzyme catalyses (S)-lactate + NAD(+) = pyruvate + NADH + H(+). Its pathway is fermentation; pyruvate fermentation to lactate; (S)-lactate from pyruvate: step 1/1. Its activity is regulated as follows. Allosterically activated by fructose 1,6-bisphosphate (FBP). The improvement in affinity for substrate occurs in two steps; the binding of fructose 1,6-bisphosphate (FBP) to the dimer, and the dimer to tetramer conversion. Functionally, catalyzes the conversion of lactate to pyruvate. This is L-lactate dehydrogenase from Geobacillus stearothermophilus (Bacillus stearothermophilus).